The sequence spans 863 residues: Disintegrin and metalloproteinase domain-containing protein 15 (863 aa).

The first 17 residues, 1 to 17 (MRLALLWALGLLGAGSP), serve as a signal peptide directing secretion. The propeptide occupies 18-206 (LPSWPLPNIG…LGQRHIRRRR (189 aa)). Residues 22 to 45 (PLPNIGGTEEQQAESEKAPREPLE) are disordered. Positions 35–44 (ESEKAPREPL) are enriched in basic and acidic residues. The Cysteine switch signature appears at 177–184 (HTCALSWR). Cys-179 contacts Zn(2+). Over 207-696 (DVVTETKTVE…QLKATSSLTT (490 aa)) the chain is Extracellular. Positions 213-414 (KTVELVIVAD…GMGSCLFERL (202 aa)) constitute a Peptidase M12B domain. Residue Asn-237 is glycosylated (N-linked (GlcNAc...) asparagine). 4 disulfide bridges follow: Cys-323–Cys-409, Cys-365–Cys-393, Cys-367–Cys-376, and Cys-480–Cys-500. Residue His-348 coordinates Zn(2+). Glu-349 is a catalytic residue. Residues His-352 and His-358 each coordinate Zn(2+). 2 N-linked (GlcNAc...) asparagine glycosylation sites follow: Asn-389 and Asn-392. The Disintegrin domain occupies 421–508 (AAFCGNMFVE…QCPPDVSLGD (88 aa)). The Cell attachment site signature appears at 484–486 (RGD). Asn-606 and Asn-611 each carry an N-linked (GlcNAc...) asparagine glycan. Intrachain disulfides connect Cys-657–Cys-667, Cys-661–Cys-673, and Cys-675–Cys-684. The EGF-like domain occupies 657–685 (CRSKCHGHGVCDSNRHCYCEEGWAPPDCT). Residues 697–717 (GLLLSLLVLLVLVMLGASYWY) form a helical membrane-spanning segment. A phosphotyrosine; by HCK and LCK mark is found at Tyr-715 and Tyr-735. Over 718 to 863 (RARLHQRLCQ…PPPTVSSLYL (146 aa)) the chain is Cytoplasmic. The interval 736–863 (RAAQSGPSER…PPPTVSSLYL (128 aa)) is disordered. Positions 767–778 (PAPPSRPLPPDP) are enriched in pro residues. The span at 779-789 (VSKRLQAELAD) shows a compositional bias: basic and acidic residues. 2 stretches are compositionally biased toward pro residues: residues 791 to 800 (PNPPTRPLPA) and 813 to 824 (AKPPPPRKPLPA). 2 consecutive short sequence motifs (SH3-binding) follow at residues 815-821 (PPPPRKP) and 850-856 (RPAPPPP).

As to quaternary structure, interacts with ITAGV-ITGB3 (vitronectin receptor). Interacts with SH3GL2 and SNX9; this interaction occurs preferentially with ADAM15 precursor, rather than the processed form, suggesting it occurs in a secretory pathway compartment prior to the medial Golgi. Interacts with ITAG9-ITGB1. Interacts specifically with Src family protein-tyrosine kinases (PTKs). Interacts with SH3PXD2A. Interacts with ITAGV-ITGB1. Interacts with GRB2, HCK, ITSN1, ITSN2, LYN, MAPK1, MAPK3, NCF1, NCK1, nephrocystin, PTK6, SNX33, LCK and SRC. It depends on Zn(2+) as a cofactor. Post-translationally, the precursor is cleaved by a furin endopeptidase. Phosphorylation increases association with PTKs. As to expression, expressed in colon and small intestine. Expressed in airway smooth muscle and glomerular mesangial cells (at protein level). Ubiquitously expressed. Overexpressed in atherosclerotic lesions. Constitutively expressed in cultured endothelium and smooth muscle. Expressed in chondrocytes. Expressed in airway smooth muscle and glomerular mesangial cells.

The protein resides in the endomembrane system. The protein localises to the cell junction. It localises to the adherens junction. Its subcellular location is the cell projection. It is found in the cilium. The protein resides in the flagellum. The protein localises to the cytoplasmic vesicle. It localises to the secretory vesicle. Its subcellular location is the acrosome. Inhibited by hydroxamate-type metalloproteinase inhibitors such as marimastat. Inhibited by metalloproteinase inhibitor 2 (TIMP-2) and TIMP-3 at nanomolar concentrations. Not significantly inhibited by TIMP-1 at concentrations of up to 100 nM. Not activated by PMA or ionomycin. Active metalloproteinase with gelatinolytic and collagenolytic activity. Plays a role in the wound healing process. Mediates both heterotypic intraepithelial cell/T-cell interactions and homotypic T-cell aggregation. Inhibits beta-1 integrin-mediated cell adhesion and migration of airway smooth muscle cells. Suppresses cell motility on or towards fibronectin possibly by driving alpha-v/beta-1 integrin (ITAGV-ITGB1) cell surface expression via ERK1/2 inactivation. Cleaves E-cadherin in response to growth factor deprivation. Plays a role in glomerular cell migration. Plays a role in pathological neovascularization. May play a role in cartilage remodeling. May be proteolytically processed, during sperm epididymal maturation and the acrosome reaction. May play a role in sperm-egg binding through its disintegrin domain. The chain is Disintegrin and metalloproteinase domain-containing protein 15 (ADAM15) from Homo sapiens (Human).